A 515-amino-acid polypeptide reads, in one-letter code: Bifunctional purine biosynthesis protein PurH (515 aa).

The MGS-like domain maps to 1 to 145 (MTKRALISVS…KNHASVTVVV (145 aa)).

Belongs to the PurH family.

The catalysed reaction is (6R)-10-formyltetrahydrofolate + 5-amino-1-(5-phospho-beta-D-ribosyl)imidazole-4-carboxamide = 5-formamido-1-(5-phospho-D-ribosyl)imidazole-4-carboxamide + (6S)-5,6,7,8-tetrahydrofolate. The enzyme catalyses IMP + H2O = 5-formamido-1-(5-phospho-D-ribosyl)imidazole-4-carboxamide. It functions in the pathway purine metabolism; IMP biosynthesis via de novo pathway; 5-formamido-1-(5-phospho-D-ribosyl)imidazole-4-carboxamide from 5-amino-1-(5-phospho-D-ribosyl)imidazole-4-carboxamide (10-formyl THF route): step 1/1. The protein operates within purine metabolism; IMP biosynthesis via de novo pathway; IMP from 5-formamido-1-(5-phospho-D-ribosyl)imidazole-4-carboxamide: step 1/1. The chain is Bifunctional purine biosynthesis protein PurH from Streptococcus agalactiae serotype III (strain NEM316).